The primary structure comprises 427 residues: Fumarylacetoacetase (427 aa).

Aspartate 130 provides a ligand contact to Ca(2+). Tyrosine 132 serves as a coordination point for substrate. Residue histidine 137 is the Proton acceptor of the active site. Residue arginine 146 participates in substrate binding. Ca(2+)-binding residues include glutamate 204, glutamate 206, and aspartate 239. Aspartate 239 contributes to the Mg(2+) binding site. Glutamine 246 and tyrosine 250 together coordinate substrate. Residues lysine 259 and serine 263 each coordinate Mg(2+). Threonine 356 lines the substrate pocket.

The protein belongs to the FAH family. Ca(2+) is required as a cofactor. Requires Mg(2+) as cofactor.

It catalyses the reaction 4-fumarylacetoacetate + H2O = acetoacetate + fumarate + H(+). The protein operates within amino-acid degradation; L-phenylalanine degradation; acetoacetate and fumarate from L-phenylalanine: step 6/6. The protein is Fumarylacetoacetase (fah) of Dictyostelium discoideum (Social amoeba).